The sequence spans 698 residues: Elongation factor G (698 aa).

The region spanning E8 to N290 is the tr-type G domain. Residues A17–T24, D88–H92, and N142–D145 contribute to the GTP site.

This sequence belongs to the TRAFAC class translation factor GTPase superfamily. Classic translation factor GTPase family. EF-G/EF-2 subfamily.

The protein resides in the cytoplasm. In terms of biological role, catalyzes the GTP-dependent ribosomal translocation step during translation elongation. During this step, the ribosome changes from the pre-translocational (PRE) to the post-translocational (POST) state as the newly formed A-site-bound peptidyl-tRNA and P-site-bound deacylated tRNA move to the P and E sites, respectively. Catalyzes the coordinated movement of the two tRNA molecules, the mRNA and conformational changes in the ribosome. This is Elongation factor G from Halorhodospira halophila (strain DSM 244 / SL1) (Ectothiorhodospira halophila (strain DSM 244 / SL1)).